A 338-amino-acid chain; its full sequence is MNLQRFPRYPLTFGPTPIQPLKRLSAHLGGKVKLYAKREDCNSGLAFGGNKTRKLEYLIPDALAQGADTLVSIGGVQSNQTRQVAAVAAHLGMKCVLVQEHWVNYDDPVYDRVGNIQLSRMMGADVRLVADGFDIGIRRSWEEAMESVRQAGGKPYPIPAGCSEHPLGGLGFVGFAEEVRAQEAELGFKFDYIVVCSVTGSTQAGMVVGFAADGRADRVIGIDASATPEKTHAQITRIARHTAEIVELGRRIDEQDVVLDTRYAGPEYGLPNDGTLEAIRLCARLEGVLTDPVYEGKSMHGMIDKVRLGEFEPGSKVLYAHLGGVPALSAYAEIFRNG.

An N6-(pyridoxal phosphate)lysine modification is found at Lys-51. Ser-78 (nucleophile) is an active-site residue.

This sequence belongs to the ACC deaminase/D-cysteine desulfhydrase family. In terms of assembly, homotrimer. The cofactor is pyridoxal 5'-phosphate.

It catalyses the reaction 1-aminocyclopropane-1-carboxylate + H2O = 2-oxobutanoate + NH4(+). Catalyzes a cyclopropane ring-opening reaction, the irreversible conversion of 1-aminocyclopropane-1-carboxylate (ACC) to ammonia and alpha-ketobutyrate. Allows growth on ACC as a nitrogen source. The polypeptide is 1-aminocyclopropane-1-carboxylate deaminase (Burkholderia ambifaria (strain MC40-6)).